The chain runs to 148 residues: Arginine repressor (148 aa).

It belongs to the ArgR family.

It is found in the cytoplasm. Its pathway is amino-acid biosynthesis; L-arginine biosynthesis [regulation]. Functionally, regulates arginine biosynthesis genes. This is Arginine repressor (argR) from Streptococcus pneumoniae serotype 4 (strain ATCC BAA-334 / TIGR4).